The sequence spans 1056 residues: MISDDDDLPSTRPGSVNEELPETEPEDNDELPETEPESDSDKPTVTSNKTENQVADEDYDSFDDFVPSQTHTASKIPVKNKRAKKCTVESDSSSSDDSDQGDDCEFIPACDETQEVPKIKRGYTLRTRASVKNKCDDSWDDGIDEEDVSKRSEDTLNDSFVDPEFMDSVLDNQLTIKGKKQFLDDGEFFTDRNVPQIDEATKMKWASMTSPPQEALNALNEFFGHKGFREKQWDVVRNVLGGKDQFVLMSTGYGKSVCYQLPSLLLNSMTVVVSPLISLMNDQVTTLVSKGIDAVKLDGHSTQIEWDQVANNMHRIRFIYMSPEMVTSQKGLELLTSCRKHISLLAIDEAHCVSQWGHDFRNSYRHLAEIRNRSDLCNIPMIALTATATVRVRDDVIANLRLRKPLITTTSFDRKNLYISVHSSKDMAEDLGLFMKTDEVKGRHFGGPTIIYCQTKQMVDDVNCVLRRIGVRSAHYHAGLTKNQREKAHTDFMRDKITTIVATVAFGMGIDKPDVRNVIHYGCPNNIESYYQEIGRAGRDGSPSICRVFWAPKDLNTIKFKLRNSQQKEEVVENLTMMLRQLELVLTTVGCRRYQLLKHFDPSYAKPPTMQADCCDRCTEMLNGNQDSSSSIVDVTTESKWLFQVINEMYNGKTGIGKPIEFLRGSSKEDWRIKTTSQQKLFGIGKHIPDKWWKALAASLRIAGYLGEVRLMQMKFGSCITLSELGERWLLTGKEMKIDATPILLQGKKEKAAPSTVPGASRSQSTKSSTEIPTKILGANKIREYEPANENEQLMNLKKQEVTGLPEKIDQLRSRLDDIRVGIANMHEVAPFQIVSNTVLDCFANLRPTSASNLEMIDGMSAQQKSRYGKRFVDCVVQFSKETGIATNVNANDMIPPELISKMQKVLSDAVRRVYTEHLISRSTAKEVATARGISEGTVYSYLAMAVEKGLPLHLDKLNVSRKNIAMALNAVRVHLGSNVAVLTPWVEAMGVVPDFNQLKLIRAILIYEYGLDTSENQEKPDIQSMPSTSNPSTIKTVPSTPSSSLRAPPLKKFKL.

The interval 1-102 (MISDDDDLPS…SSSDDSDQGD (102 aa)) is disordered. A run of 2 repeats spans residues 17-26 (NEELPETEPE) and 28-37 (NDELPETEPE). Positions 17 to 37 (NEELPETEPEDNDELPETEPE) are 2 X 10 AA repeats of N-[ED]-E-L-P-E-T-E-P-E. The segment covering 19–38 (ELPETEPEDNDELPETEPES) has biased composition (acidic residues). The span at 43–53 (PTVTSNKTENQ) shows a compositional bias: polar residues. Over residues 54 to 63 (VADEDYDSFD) the composition is skewed to acidic residues. Residues 236-406 (VRNVLGGKDQ…IANLRLRKPL (171 aa)) enclose the Helicase ATP-binding domain. Residue 249-256 (MSTGYGKS) coordinates ATP. The short motif at 348–351 (DEAH) is the DEAH box element. In terms of domain architecture, Helicase C-terminal spans 427-583 (MAEDLGLFMK…NLTMMLRQLE (157 aa)). Zn(2+) is bound by residues Cys591, Cys614, Cys615, and Cys618. The interval 749–771 (KEKAAPSTVPGASRSQSTKSSTE) is disordered. Positions 761–771 (SRSQSTKSSTE) are enriched in polar residues. The 81-residue stretch at 806–886 (PEKIDQLRSR…VQFSKETGIA (81 aa)) folds into the HRDC domain. The tract at residues 1018–1056 (QEKPDIQSMPSTSNPSTIKTVPSTPSSSLRAPPLKKFKL) is disordered. The span at 1025–1046 (SMPSTSNPSTIKTVPSTPSSSL) shows a compositional bias: polar residues.

Belongs to the helicase family. RecQ subfamily. Zn(2+) serves as cofactor.

The protein localises to the nucleus. It carries out the reaction Couples ATP hydrolysis with the unwinding of duplex DNA by translocating in the 3'-5' direction.. The enzyme catalyses ATP + H2O = ADP + phosphate + H(+). Functionally, essential for the formation of DNA replication focal centers; stably associates with foci elements generating binding sites for RP-A. Exhibits a magnesium-dependent ATP-dependent 3'-5' DNA-helicase activity. May be involved in the control of genomic stability. The protein is ATP-dependent helicase wrn-1 (wrn-1) of Caenorhabditis elegans.